The chain runs to 174 residues: Shikimate kinase 2 (174 aa).

An ATP-binding site is contributed by 12-17 (GCGKTT). Mg(2+) is bound by residues Thr16 and Asp32. Residues Asp34, Arg58, and Gly79 each contribute to the substrate site. Residues 112 to 126 (QAAPEEDLRPTLTGK) form an LID domain region. Arg120 lines the ATP pocket. Residue Arg139 coordinates substrate.

It belongs to the shikimate kinase family. AroL subfamily. As to quaternary structure, monomer. Mg(2+) is required as a cofactor.

Its subcellular location is the cytoplasm. The catalysed reaction is shikimate + ATP = 3-phosphoshikimate + ADP + H(+). The protein operates within metabolic intermediate biosynthesis; chorismate biosynthesis; chorismate from D-erythrose 4-phosphate and phosphoenolpyruvate: step 5/7. Functionally, catalyzes the specific phosphorylation of the 3-hydroxyl group of shikimic acid using ATP as a cosubstrate. The polypeptide is Shikimate kinase 2 (Escherichia coli O7:K1 (strain IAI39 / ExPEC)).